Here is a 523-residue protein sequence, read N- to C-terminus: Dynein regulatory complex subunit 3 (523 aa).

LRR repeat units lie at residues Asp44–Glu65, Asn66–Ala87, His88–Val109, Asn110–Val131, and Lys132–Arg153. The region spanning Asn166–Lys204 is the LRRCT domain. Coiled coils occupy residues Ser208–Glu242 and Met366–Val391.

Belongs to the DRC3 family. In terms of assembly, component of the nexin-dynein regulatory complex (N-DRC). Interacts with DRC1. Interacts with TCTE1/DRC5. Interacts with DRC7.

The protein resides in the cytoplasm. It localises to the cytoskeleton. It is found in the cilium axoneme. The protein localises to the cell projection. Its subcellular location is the cilium. The protein resides in the flagellum axoneme. It localises to the flagellum. Its function is as follows. Component of the nexin-dynein regulatory complex (N-DRC) a key regulator of ciliary/flagellar motility which maintains the alignment and integrity of the distal axoneme and regulates microtubule sliding in motile axonemes. This Homo sapiens (Human) protein is Dynein regulatory complex subunit 3 (DRC3).